We begin with the raw amino-acid sequence, 311 residues long: p-hydroxybenzoic acid efflux pump subunit AaeA (311 aa).

A helical transmembrane segment spans residues 11–31 (IGITLLVVLLAVIAIFKVWAF).

The protein belongs to the membrane fusion protein (MFP) (TC 8.A.1) family.

The protein localises to the cell inner membrane. In terms of biological role, forms an efflux pump with AaeB. In Yersinia enterocolitica serotype O:8 / biotype 1B (strain NCTC 13174 / 8081), this protein is p-hydroxybenzoic acid efflux pump subunit AaeA.